We begin with the raw amino-acid sequence, 498 residues long: Polyamine aminopropyltransferase (498 aa).

The next 6 helical transmembrane spans lie at 7 to 27, 35 to 55, 67 to 87, 97 to 117, 134 to 154, and 163 to 183; these read ISVLIISSCGLVYELLAGTIA, VTQFSLIIGTYLFSMGVGSWL, FLEIELAIGLVGGFSSAILYL, IPLFLLVILIGILVGLEIPVL, VLSLDYVGALLASILFPIFFA, and GFIFGILNVGVALWGTWVLPL. Residues 196–446 are spermidine synthase; it reads VVVLTLLILG…AGQRPIQFKK (251 aa). One can recognise a PABS domain in the interval 200–439; sequence TLLILGFSYS…GEWGFVLAGQ (240 aa). Gln-234 contacts S-methyl-5'-thioadenosine. Spermidine is bound by residues His-264 and Asp-288. S-methyl-5'-thioadenosine-binding positions include Asp-308 and 342–343; that span reads DA. The active-site Proton acceptor is the Asp-360.

Belongs to the spermidine/spermine synthase family. As to quaternary structure, homodimer or homotetramer.

The protein localises to the cell membrane. It catalyses the reaction S-adenosyl 3-(methylsulfanyl)propylamine + putrescine = S-methyl-5'-thioadenosine + spermidine + H(+). The protein operates within amine and polyamine biosynthesis; spermidine biosynthesis; spermidine from putrescine: step 1/1. Catalyzes the irreversible transfer of a propylamine group from the amino donor S-adenosylmethioninamine (decarboxy-AdoMet) to putrescine (1,4-diaminobutane) to yield spermidine. In Leptospira interrogans serogroup Icterohaemorrhagiae serovar copenhageni (strain Fiocruz L1-130), this protein is Polyamine aminopropyltransferase.